A 78-amino-acid polypeptide reads, in one-letter code: D-alanyl carrier protein (78 aa).

A Carrier domain is found at 1–77 (MAVKEEVVEI…KVIAKVESLI (77 aa)). S35 bears the O-(pantetheine 4'-phosphoryl)serine mark.

The protein belongs to the DltC family. 4'-phosphopantetheine is transferred from CoA to a specific serine of apo-DCP.

It is found in the cytoplasm. Its pathway is cell wall biogenesis; lipoteichoic acid biosynthesis. In terms of biological role, carrier protein involved in the D-alanylation of lipoteichoic acid (LTA). The loading of thioester-linked D-alanine onto DltC is catalyzed by D-alanine--D-alanyl carrier protein ligase DltA. The DltC-carried D-alanyl group is further transferred to cell membrane phosphatidylglycerol (PG) by forming an ester bond, probably catalyzed by DltD. D-alanylation of LTA plays an important role in modulating the properties of the cell wall in Gram-positive bacteria, influencing the net charge of the cell wall. In Leuconostoc citreum (strain KM20), this protein is D-alanyl carrier protein.